A 157-amino-acid chain; its full sequence is 2-C-methyl-D-erythritol 2,4-cyclodiphosphate synthase (157 aa).

2 residues coordinate a divalent metal cation: D8 and H10. Residues 8-10 and 34-35 contribute to the 4-CDP-2-C-methyl-D-erythritol 2-phosphate site; these read DVH and HS. H42 provides a ligand contact to a divalent metal cation. 4-CDP-2-C-methyl-D-erythritol 2-phosphate contacts are provided by residues 56–58, 61–65, 100–106, 132–135, F139, and R142; these read DIG, FPDTD, AQAPKML, and TTTE.

The protein belongs to the IspF family. Homotrimer. A divalent metal cation serves as cofactor.

It catalyses the reaction 4-CDP-2-C-methyl-D-erythritol 2-phosphate = 2-C-methyl-D-erythritol 2,4-cyclic diphosphate + CMP. It functions in the pathway isoprenoid biosynthesis; isopentenyl diphosphate biosynthesis via DXP pathway; isopentenyl diphosphate from 1-deoxy-D-xylulose 5-phosphate: step 4/6. Its function is as follows. Involved in the biosynthesis of isopentenyl diphosphate (IPP) and dimethylallyl diphosphate (DMAPP), two major building blocks of isoprenoid compounds. Catalyzes the conversion of 4-diphosphocytidyl-2-C-methyl-D-erythritol 2-phosphate (CDP-ME2P) to 2-C-methyl-D-erythritol 2,4-cyclodiphosphate (ME-CPP) with a corresponding release of cytidine 5-monophosphate (CMP). This chain is 2-C-methyl-D-erythritol 2,4-cyclodiphosphate synthase, found in Photorhabdus laumondii subsp. laumondii (strain DSM 15139 / CIP 105565 / TT01) (Photorhabdus luminescens subsp. laumondii).